We begin with the raw amino-acid sequence, 64 residues long: Small ribosomal subunit protein bS21 (64 aa).

It belongs to the bacterial ribosomal protein bS21 family.

This Pelagibacter ubique (strain HTCC1062) protein is Small ribosomal subunit protein bS21.